The following is a 339-amino-acid chain: Phosphoribosylformylglycinamidine cyclo-ligase (339 aa).

This sequence belongs to the AIR synthase family.

Its subcellular location is the cytoplasm. It carries out the reaction 2-formamido-N(1)-(5-O-phospho-beta-D-ribosyl)acetamidine + ATP = 5-amino-1-(5-phospho-beta-D-ribosyl)imidazole + ADP + phosphate + H(+). The protein operates within purine metabolism; IMP biosynthesis via de novo pathway; 5-amino-1-(5-phospho-D-ribosyl)imidazole from N(2)-formyl-N(1)-(5-phospho-D-ribosyl)glycinamide: step 2/2. This Methanobrevibacter smithii (strain ATCC 35061 / DSM 861 / OCM 144 / PS) protein is Phosphoribosylformylglycinamidine cyclo-ligase.